The chain runs to 130 residues: Calcium-binding protein KRP1 (130 aa).

The EF-hand domain maps to 72-107 (LTDEDVRCMIKEGDFDCDGALNQMEFCVLMFRLSPD). Ca(2+) contacts are provided by Asp85, Asp87, Asp89, and Glu96.

In terms of biological role, potential calcium sensor that binds calcium in vitro. This is Calcium-binding protein KRP1 from Arabidopsis thaliana (Mouse-ear cress).